Reading from the N-terminus, the 778-residue chain is Transcription factor kayak (778 aa).

2 stretches are compositionally biased toward low complexity: residues Ala24–Gln54 and Gln77–Leu98. Disordered stretches follow at residues Ala24–Leu57, Asn76–Arg130, Gln183–Gly223, Ala294–Ser320, Ala356–Gly414, and Arg427–Arg478. Residues Pro99–Glu108 are compositionally biased toward polar residues. Low complexity-rich tracts occupy residues Gln109–Arg130 and Gln183–Asn222. Positions Ile382–Gly402 are enriched in low complexity. The segment covering Asn403 to Gly414 has biased composition (gly residues). Residues Arg427 to Thr436 show a composition bias toward polar residues. One can recognise a bZIP domain in the interval Glu457–His520. The tract at residues Lys459–Arg478 is basic motif. Residues Leu485–Leu513 form a leucine-zipper region. Residues Gly550–Gly571 show a composition bias toward low complexity. 2 disordered regions span residues Gly550–Pro594 and Thr756–Leu778. A compositionally biased stretch (polar residues) spans Thr579 to Pro589. Residue Ser588 is modified to Phosphoserine.

Belongs to the bZIP family. Fos subfamily. Homodimer. Heterodimer with Jra. The kay-Jra heterodimer binds more stably to the AP-1 site than either of the two proteins alone.

Its subcellular location is the nucleus. Its function is as follows. Developmentally regulated transcription factor AP-1 binds and recognizes the enhancer DNA sequence: 5'-TGA[CG]TCA-3'. May play a role in the function or determination of a particular subset of cells in the developing embryo. It is able to carry out its function either independently of or in conjunction with Jra. The protein is Transcription factor kayak of Drosophila pseudoobscura pseudoobscura (Fruit fly).